The chain runs to 138 residues: ATP synthase epsilon chain (138 aa).

This sequence belongs to the ATPase epsilon chain family. As to quaternary structure, F-type ATPases have 2 components, CF(1) - the catalytic core - and CF(0) - the membrane proton channel. CF(1) has five subunits: alpha(3), beta(3), gamma(1), delta(1), epsilon(1). CF(0) has three main subunits: a, b and c.

It is found in the cell inner membrane. Functionally, produces ATP from ADP in the presence of a proton gradient across the membrane. In Vesicomyosocius okutanii subsp. Calyptogena okutanii (strain HA), this protein is ATP synthase epsilon chain.